Consider the following 252-residue polypeptide: Imidazole glycerol phosphate synthase subunit HisF (252 aa).

Active-site residues include D11 and D130.

Belongs to the HisA/HisF family. As to quaternary structure, heterodimer of HisH and HisF.

It is found in the cytoplasm. The enzyme catalyses 5-[(5-phospho-1-deoxy-D-ribulos-1-ylimino)methylamino]-1-(5-phospho-beta-D-ribosyl)imidazole-4-carboxamide + L-glutamine = D-erythro-1-(imidazol-4-yl)glycerol 3-phosphate + 5-amino-1-(5-phospho-beta-D-ribosyl)imidazole-4-carboxamide + L-glutamate + H(+). It participates in amino-acid biosynthesis; L-histidine biosynthesis; L-histidine from 5-phospho-alpha-D-ribose 1-diphosphate: step 5/9. In terms of biological role, IGPS catalyzes the conversion of PRFAR and glutamine to IGP, AICAR and glutamate. The HisF subunit catalyzes the cyclization activity that produces IGP and AICAR from PRFAR using the ammonia provided by the HisH subunit. The sequence is that of Imidazole glycerol phosphate synthase subunit HisF from Syntrophomonas wolfei subsp. wolfei (strain DSM 2245B / Goettingen).